The chain runs to 230 residues: Thymidylate kinase (230 aa).

Residue 20–27 (GGEGAGKS) participates in ATP binding.

This sequence belongs to the thymidylate kinase family.

It catalyses the reaction dTMP + ATP = dTDP + ADP. In terms of biological role, phosphorylation of dTMP to form dTDP in both de novo and salvage pathways of dTTP synthesis. The protein is Thymidylate kinase of Rhodopseudomonas palustris (strain ATCC BAA-98 / CGA009).